A 223-amino-acid chain; its full sequence is DnaJ homolog subfamily B member 9 (223 aa).

The N-terminal stretch at 1–23 (MATPQSIFIFAICILMITELILA) is a signal peptide. The J domain maps to 26–90 (SYYDILGVPK…NRRKEYDTLG (65 aa)). Positions 91 to 223 (HSAFTSGKGQ…VTTYTDCSGQ (133 aa)) are divergent targeting domain. Residue Ser-133 is modified to Phosphoserine.

As to quaternary structure, interacts with HSPA5/BiP; interaction is direct. Interacts with ERN1/IRE1 (via the luminal region). Interacts with DERL1. As to expression, widely expressed. Expressed at highest level in the liver, placenta and kidney.

The protein localises to the endoplasmic reticulum lumen. In terms of biological role, co-chaperone for Hsp70 protein HSPA5/BiP that acts as a key repressor of the ERN1/IRE1-mediated unfolded protein response (UPR). J domain-containing co-chaperones stimulate the ATPase activity of Hsp70 proteins and are required for efficient substrate recognition by Hsp70 proteins. In the unstressed endoplasmic reticulum, interacts with the luminal region of ERN1/IRE1 and selectively recruits HSPA5/BiP: HSPA5/BiP disrupts the dimerization of the active ERN1/IRE1 luminal region, thereby inactivating ERN1/IRE1. Also involved in endoplasmic reticulum-associated degradation (ERAD) of misfolded proteins. Required for survival of B-cell progenitors and normal antibody production. This Homo sapiens (Human) protein is DnaJ homolog subfamily B member 9 (DNAJB9).